A 145-amino-acid chain; its full sequence is 3-dehydroquinate dehydratase (145 aa).

Residue tyrosine 23 is the Proton acceptor of the active site. Substrate is bound by residues asparagine 74, histidine 80, and aspartate 87. Histidine 100 (proton donor) is an active-site residue. Substrate is bound by residues 101-102 (LS) and arginine 111.

This sequence belongs to the type-II 3-dehydroquinase family. In terms of assembly, homododecamer.

It carries out the reaction 3-dehydroquinate = 3-dehydroshikimate + H2O. Its pathway is metabolic intermediate biosynthesis; chorismate biosynthesis; chorismate from D-erythrose 4-phosphate and phosphoenolpyruvate: step 3/7. Catalyzes a trans-dehydration via an enolate intermediate. In Bacillus licheniformis (strain ATCC 14580 / DSM 13 / JCM 2505 / CCUG 7422 / NBRC 12200 / NCIMB 9375 / NCTC 10341 / NRRL NRS-1264 / Gibson 46), this protein is 3-dehydroquinate dehydratase.